A 381-amino-acid chain; its full sequence is Alkanesulfonate monooxygenase (381 aa).

Belongs to the SsuD family. As to quaternary structure, homotetramer.

The enzyme catalyses an alkanesulfonate + FMNH2 + O2 = an aldehyde + FMN + sulfite + H2O + 2 H(+). Catalyzes the desulfonation of aliphatic sulfonates. In Escherichia coli O7:K1 (strain IAI39 / ExPEC), this protein is Alkanesulfonate monooxygenase.